The primary structure comprises 521 residues: MELASAHLHKGQVPWGGLLLTASLLASWSPATTAEVTIEAVPPQVAEDNNVLLLVHNLPLALGAFAWYKGNTTAIDKEIARFVPNSNMNFTGQAYSGREIIYSNGSLLFQMITMKDMGVYTLDMTDENYRRTQATVRFHVHPILLKPNITSNNSNPVEGDDSVSLTCDSYTDPDNINYLWSRNGESLSEGDRLKLSEGNRTLTLLNVTRNDTGPYVCETRNPVSVNRSDPFSLNIIYGPDTPIISPSDIYLHPGSNLNLSCHAASNPPAQYFWLINEKPHASSQELFIPNITTNNSGTYTCFVNNSVTGLSRTTVKNITVLEPVTQPFLQVTNTTVKELDSVTLTCLSNDIGANIQWLFNSQSLQLTERMTLSQNNSILRIDPIKREDAGEYQCEISNPVSVRRSNSIKLDIIFDPTQGGLSDGAIAGIVIGVVAGVALIAGLAYFLYSRKSGGGSDQRDLTEHKPSTSNHNLAPSDNSPNKVDDVAYTVLNFNSQQPNRPTSAPSSPRATETVYSEVKKK.

The first 34 residues, 1–34 (MELASAHLHKGQVPWGGLLLTASLLASWSPATTA), serve as a signal peptide directing secretion. The region spanning 35-142 (EVTIEAVPPQ…QATVRFHVHP (108 aa)) is the Ig-like V-type domain. The Extracellular portion of the chain corresponds to 35–428 (EVTIEAVPPQ…GGLSDGAIAG (394 aa)). The segment at 39–142 (EAVPPQVAED…QATVRFHVHP (104 aa)) is required for homophilic binding. N71, N89, N104, N148, N152, N199, N206, N210, N226, N258, N290, N294, N304, N317, N333, and N375 each carry an N-linked (GlcNAc...) asparagine glycan. Ig-like C2-type domains are found at residues 147–234 (PNIT…FSLN), 239–319 (PDTP…KNIT), and 323–411 (PVTQ…IKLD). A disulfide bond links C167 and C217. C261 and C301 are disulfide-bonded. An intrachain disulfide couples C346 to C394. The chain crosses the membrane as a helical span at residues 429–447 (IVIGVVAGVALIAGLAYFL). The segment at 445-457 (YFLYSRKSGGGSD) is interaction with calmodulin. Positions 447-521 (LYSRKSGGGS…ETVYSEVKKK (75 aa)) are interaction with FLNA. Residues 448-521 (YSRKSGGGSD…ETVYSEVKKK (74 aa)) lie on the Cytoplasmic side of the membrane. The tract at residues 455–521 (GSDQRDLTEH…ETVYSEVKKK (67 aa)) is disordered. Residues 457-466 (DQRDLTEHKP) show a composition bias toward basic and acidic residues. Positions 467 to 481 (STSNHNLAPSDNSPN) are enriched in polar residues. A required for interaction with PTPN11 and PTPN6 and for control of phosphorylation level region spans residues 484 to 521 (DDVAYTVLNFNSQQPNRPTSAPSSPRATETVYSEVKKK). Y488 is modified (phosphotyrosine; by SRC, LCK, INSR and EGFR). Residues 491 to 514 (LNFNSQQPNRPTSAPSSPRATETV) show a composition bias toward polar residues. Position 503 is a phosphoserine (S503). At Y515 the chain carries Phosphotyrosine; by INSR, SRC and LCK. Residues 515–518 (YSEV) are essential for interaction with PTPN11 and PTPN6.

The protein belongs to the immunoglobulin superfamily. CEA family. (Microbial infection) Interacts with MHV S1 spike glycoprotein. In terms of assembly, monomer. Oligomer. Heterodimer. Homodimer. Cis-dimer/oligomer (via Ig-like C2-type and/or via cytoplasmic domains); induced by trans-homophilic cell adhesion through an allosteric mechanism transmitted by the Ig-like V-type domain, and is regulated by intracellular calcium and calmodulin. Interacts (via cytoplasmic domain) with calmodulin in a calcium dependent manner; reduces homophilic cell adhesion through dissociation of dimer. Isoform 1 interacts (via cytoplasmic domain) with PTPN11 (preferentially) and PTPN6; cis-homodimer form is preferred; this interaction is decreased by formation of isoform 1 / isoform 2 cis-heterodimers and is dependent on the monomer/dimer equilibrium; this interaction is phosphorylation-dependent. Isoform 1 interacts with LYN. Isoform 1 interacts (via cytoplasmic domain) with SRC (via SH2 domain); this interaction is regulated by trans-homophilic cell adhesion. Isoform 1 interacts with LCK; mediates phosphorylation at Tyr-488 and Tyr-515 resulting in PTPN6 association. Isoform 1 interacts with PTPN6; this interaction is phosphorylation-dependent and causes a profound decrease in TCR stimulation-induced CD247 and ZAP70 phosphorylation. Isoform 1 interacts with TCR/CD3 complex through TCR beta chain and CD3E; colocalizes at the cell surface and upon stimulation of the TCR/CD3 complex recruits PTPN6 in the TCR/CD3 complex, resulting in dephosphorylation of CD247 and ZAP70. Isoform 1 interacts (via cytoplasmic domain) with SHC1 (via SH2 domain); SHC1 mediates interaction with INSR or EGFR in a Ser-503 phosphorylation-dependent manner. Isoform 1 interacts with EGFR; the interaction is indirect. Isoform 1 interacts with CSF3R; down-regulates the CSF3R-STAT3 pathway through recruitment of PTPN6 that dephosphorylates CSF3R. Isoform 1 (phosphorylated form) interacts with TLR4 and SYK; recruits PTPN6 that dephosphorylates SYK, reducing the production of reactive oxygen species (ROS) and lysosome disruption, leading to a reduction of the inflammasome activity. Isoform 1 interacts with FLNA; inhibits cell migration and cell scattering by interfering with the interaction of FLNA with RALA. Isoform 1 interacts (via cytoplasmic domain) with PXN; the interaction is phosphotyrosyl-dependent. Isoform 1 interacts with KLRK1; recruits PTPN6 that dephosphorylates VAV1. Isoform 1 interacts with CEACAM8. Isoform 1 interacts with FASN; this interaction is insulin and phosphorylation-dependent; reduces fatty-acid synthase activity. Interacts (via Ig-like V-type) with HAVCR2 (via Ig-like V-type); facilitates the maturation and cell surface expression of HAVCR2 thereby regulating T-cell tolerance induction. Isoform 2 interacts (via the cytoplasmic domain) with ANXA2; this interaction is regulated by phosphorylation and appears in the AIIt complex. Interacts (via Lewis X moieties) with CD209 (via C-type lectin domain); this interaction is regulated by the glycosylation pattern of CEACAM1 on cell types and regulates contact between dendritic cells and neutrophils. Phosphorylated on serine and tyrosine. Isoform 1 is phosphorylated on tyrosine by Src family kinases like SRC and LCK and by receptor like CSF3R, EGFR and INSR upon stimulation. Phosphorylated at Ser-503; mediates activity. Phosphorylated at Tyr-488; regulates activity. Phosphorylated at Tyr-488 by EGFR and INSR upon stimulation; this phosphorylation is Ser-503-phosphorylation-dependent; mediates cellular internalization; increases interaction with FASN. Phosphorylated at Tyr-488 and Tyr-515 by LCK; mediates PTPN6 association and is regulated by homophilic ligation of CEACAM1 in the absence of T-cell activation. Phosphorylated at Tyr-515; mediates interaction with PTPN11. Post-translationally, phosphorylated on serine and threonine. In terms of tissue distribution, expressed in granulocytes, lymphocytes, granulocytes, B cells, and T-cells. Expressed in bone. Highly expressed in liver and femur. Highly expressed in neutrophils, and to a lesser extent inmonocytes, and macrophages. Slightly higher expressed in peripheral blood neutrophils (PBNs). Intestinal T-cells predominantly express isoform 2 while extraintestinal T-cells mainly express isoform 1. Expressed in small intestine and colon.

The protein resides in the cell membrane. Its subcellular location is the lateral cell membrane. It localises to the apical cell membrane. It is found in the basal cell membrane. The protein localises to the cell junction. The protein resides in the adherens junction. Its subcellular location is the cytoplasmic vesicle. It localises to the secretory vesicle. It is found in the cell projection. The protein localises to the microvillus membrane. Functionally, cell adhesion protein that mediates homophilic cell adhesion in a calcium-independent manner. Plays a role as coinhibitory receptor in immune response, insulin action and also functions as an activator during angiogenesis. Its coinhibitory receptor function is phosphorylation- and PTPN6 -dependent, which in turn, suppress signal transduction of associated receptors by dephosphorylation of their downstream effectors. Plays a role in immune response, of T-cells, natural killer (NK) and neutrophils. Upon TCR/CD3 complex stimulation, inhibits TCR-mediated cytotoxicity by blocking granule exocytosis by mediating homophilic binding to adjacent cells, allowing interaction with and phosphorylation by LCK and interaction with the TCR/CD3 complex which recruits PTPN6 resulting in dephosphorylation of CD247 and ZAP70. Also inhibits T-cell proliferation and cytokine production through inhibition of JNK cascade and plays a crucial role in regulating autoimmunity and anti-tumor immunity by inhibiting T-cell through its interaction with HAVCR2. Upon natural killer (NK) cells activation, inhibit KLRK1-mediated cytolysis of CEACAM1-bearing tumor cells by trans-homophilic interactions with CEACAM1 on the target cell and lead to cis-interaction between CEACAM1 and KLRK1, allowing PTPN6 recruitment and then VAV1 dephosphorylation. Upon neutrophils activation negatively regulates IL1B production by recruiting PTPN6 to a SYK-TLR4-CEACAM1 complex, that dephosphorylates SYK, reducing the production of reactive oxygen species (ROS) and lysosome disruption, which in turn, reduces the activity of the inflammasome. Down-regulates neutrophil production by acting as a coinhibitory receptor for CSF3R by downregulating the CSF3R-STAT3 pathway through recruitment of PTPN6 that dephosphorylates CSF3R. Also regulates insulin action by promoting INS clearance and regulating lipogenesis in liver through regulating insulin signaling. Upon INS stimulation, undergoes phosphorylation by INSR leading to INS clearance by increasing receptor-mediated insulin endocytosis. This inernalization promotes interaction with FASN leading to receptor-mediated insulin degradation and to reduction of FASN activity leading to negative regulation of fatty acid synthesis. INSR-mediated phosphorylation also provokes a down-regulation of cell proliferation through SHC1 interaction resulting in decrease coupling of SHC1 to the MAPK3/ERK1-MAPK1/ERK2 and phosphatidylinositol 3-kinase pathways. Functions as activator in angiogenesis by promoting blood vessel remodeling through endothelial cell differentiation and migration and in arteriogenesis by increasing the number of collateral arteries and collateral vessel calibers after ischemia. Also regulates vascular permeability through the VEGFR2 signaling pathway resulting in control of nitric oxide production. Down-regulates cell growth in response to EGF through its interaction with SHC1 that mediates interaction with EGFR resulting in decrease coupling of SHC1 to the MAPK3/ERK1-MAPK1/ERK2 pathway. Negatively regulates platelet aggregation by decreasing platelet adhesion on type I collagen through the GPVI-FcRgamma complex. Inhibits cell migration and cell scattering through interaction with FLNA; interferes with the interaction of FLNA with RALA. Mediates bile acid transport activity in a phosphorylation dependent manner. Negatively regulates osteoclastogenesis. In terms of biological role, cell adhesion protein that mediates homophilic cell adhesion in a calcium-independent manner. Promotes populations of T-cells regulating IgA production and secretion associated with control of the commensal microbiota and resistance to enteropathogens. (Microbial infection) In case of murine coronavirus (MHV) infection, serves as receptor for MHV S1 spike glycoprotein. The protein is Cell adhesion molecule CEACAM1 of Mus musculus (Mouse).